Consider the following 432-residue polypeptide: MEGQPRGSRGPLEKPLPAATHPTLSSLGAVFILLKSALGAGLLNFPWAFYKAGGMLPTFLVALVSLVFLISGLVILGYAASVSGQTTYQGVVRELCGPAMGKLCEICFLTNLLMISVAFLRVIGDQLEKLCDSLLPDAPQPWYAAQNFTLPLISMLVIFPLSALREIALQKYTSILGTLAACYLALVITVQYYLWPQGLIRQPGPLLSPSPWTSVFSVFPTICFGFQCHEAAVSIYCSMWNQSLSHWTLVSVLSLLACCLVYTLTGVYGFLTFGPEVSADILMSYPGNDTAIIVARVLFAVSIVTVYPIVLFLGRSVMQDFWKKSYWATRGPPVLADPSGPWVRLPLTFLWVVVTLTMALFLPDLSEIISIIGGVSSFFIFIFPGLCLICAVDTEPMGPRVKCCLEAWGILSVLVGTFIFGQSTAVAMVELL.

Helical transmembrane passes span 29-49, 59-79, 103-123, 144-164, 175-195, 215-237, 253-273, 292-312, 345-365, 368-388, and 409-429; these read AVFI…PWAF, FLVA…LGYA, LCEI…LRVI, AAQN…LSAL, ILGT…YYLW, VFSV…SIYC, LSLL…FLTF, IIVA…IVLF, LPLT…LPDL, IISI…GLCL, and GILS…VAMV.

Belongs to the amino acid/polyamine transporter 2 family. As to expression, expressed in neurons located in the gray matter. Highly expressed in thalamus, hypothalamus, amygdala and pons. Expressed in the CA3 area of hippocampus and in the Purkinje layer of the cerebellum (at protein level). Expressed in the eye.

It is found in the membrane. It localises to the cytoplasm. Its subcellular location is the cell cortex. The protein resides in the cell projection. The protein localises to the axon. The catalysed reaction is L-glutamine(out) = L-glutamine(in). The enzyme catalyses L-alanine(in) = L-alanine(out). It catalyses the reaction L-histidine(out) = L-histidine(in). It carries out the reaction L-aspartate(out) = L-aspartate(in). The catalysed reaction is L-arginine(in) = L-arginine(out). The enzyme catalyses L-leucine(in) = L-leucine(out). Functionally, electrogenic sodium-dependent amino acid transporter with a preference for L-glutamine, L-alanine, L-histidine, L-aspartate and L-arginine. May facilitate glutamine uptake in both excitatory and inhibitory neurons. The transport mechanism and stoichiometry remain to be elucidated. This is Solute carrier family 38 member 8 from Mus musculus (Mouse).